We begin with the raw amino-acid sequence, 501 residues long: Probable leucine aminopeptidase 2 (501 aa).

The first 18 residues, 1-18 (MVTMKLLYLTSFASLAVA), serve as a signal peptide directing secretion. Positions 119–216 (SPSVNATAPL…ADGQALIQMI (98 aa)) constitute a PA domain. Asn-123 and Asn-233 each carry an N-linked (GlcNAc...) asparagine glycan. 2 residues coordinate Zn(2+): His-257 and Asp-269. Glu-301 (proton acceptor) is an active-site residue. Glu-302 contributes to the Zn(2+) binding site. Asn-316 carries N-linked (GlcNAc...) asparagine glycosylation. Asp-330 is a Zn(2+) binding site. N-linked (GlcNAc...) asparagine glycosylation occurs at Asn-350. His-428 contacts Zn(2+). 2 N-linked (GlcNAc...) asparagine glycosylation sites follow: Asn-433 and Asn-467. The interval 480 to 501 (AMKRTPHTHTGGTGCYKDRVEQ) is disordered.

It belongs to the peptidase M28 family. M28A subfamily. As to quaternary structure, monomer. It depends on Zn(2+) as a cofactor.

The protein localises to the secreted. Functionally, extracellular aminopeptidase that releases a wide variety of amino acids from natural peptides and contributes to pathogenicity. In Aspergillus fumigatus (strain ATCC MYA-4609 / CBS 101355 / FGSC A1100 / Af293) (Neosartorya fumigata), this protein is Probable leucine aminopeptidase 2 (lap2).